The following is a 486-amino-acid chain: Transmembrane protein 39A (486 aa).

An N-linked (GlcNAc...) asparagine glycan is attached at N31. 8 consecutive transmembrane segments (helical) span residues 72-92 (SLFF…IQYI), 110-130 (TSLN…VMLA), 155-175 (LILA…WTLV), 182-202 (SVLN…LYCF), 285-305 (EVLF…LCFV), 317-337 (CEHL…QLLP), 418-438 (VLNL…YSLL), and 444-464 (NHTL…FKLL).

It belongs to the TMEM39 family. As to quaternary structure, interacts with SACM1L, SEC23A and SEC24A.

Its subcellular location is the endoplasmic reticulum membrane. Its function is as follows. Regulates autophagy by controlling the spatial distribution and levels of the intracellular phosphatidylinositol 4-phosphate (PtdIns(4)P) pools. Modulates (PtdIns(4)P) levels by regulating the ER-to-Golgi trafficking of the phosphatidylinositide phosphatase SACM1L. This Mus musculus (Mouse) protein is Transmembrane protein 39A (Tmem39a).